The chain runs to 328 residues: MSKKPVRVAVTGAAGQIGYALLFRIASGEMLGKDQPVILQLLEIPDEKAQNALKGVIMELEDCAFPLLAGIEAHSDPMTAFKDTDYALLVGARPRGPGMERADLLAANAQIFTAQGKALNAVASRNVKVLVVGNPANTNAYIAMKSAPDLPAKNFTAMLRLDHNRAASQLAAKGGFKVGDIKKLTVWGNHSPTMYADYRFATVDGKSVKDAINDQAWNKDVFLPTVGKRGAAIIAARGLSSAASAANAAIDHMRDWALGSKGEWVTMGVPSNGEYGIPAGIVFGFPVTTENGEYKIVEGLAIDAFSQECIDKTLAELQGEQDGVKHLL.

12–18 (GAAGQIG) lines the NAD(+) pocket. Positions 95 and 101 each coordinate substrate. Residues asparagine 108, glutamine 115, and 132-134 (VGN) each bind NAD(+). Residues asparagine 134 and arginine 165 each contribute to the substrate site. Residue histidine 190 is the Proton acceptor of the active site.

The protein belongs to the LDH/MDH superfamily. MDH type 2 family.

The catalysed reaction is (S)-malate + NAD(+) = oxaloacetate + NADH + H(+). Catalyzes the reversible oxidation of malate to oxaloacetate. This chain is Malate dehydrogenase, found in Acidovorax ebreus (strain TPSY) (Diaphorobacter sp. (strain TPSY)).